A 296-amino-acid polypeptide reads, in one-letter code: Protein-export membrane protein SecF (296 aa).

The next 6 helical transmembrane spans lie at 23-43 (MIIY…ANYV), 144-164 (AIVY…RVPV), 169-189 (VVFS…IFGI), 194-214 (ATIA…ILLT), 236-256 (GFTM…FSTA), and 265-285 (VLIF…AGVL).

Belongs to the SecD/SecF family. SecF subfamily. Part of the protein translocation apparatus. Forms a complex with SecD.

The protein localises to the cell membrane. Functionally, involved in protein export. The polypeptide is Protein-export membrane protein SecF (Pyrococcus furiosus (strain ATCC 43587 / DSM 3638 / JCM 8422 / Vc1)).